The primary structure comprises 461 residues: Photosystem II CP43 reaction center protein (461 aa).

5 helical membrane passes run 57–81, 122–143, 166–188, 243–263, and 279–300; these read LFEVAHFVPEKPMYEQGIILLSHLA, LRGPESLEEYSTFFSQDWKDKN, KAMFFGGVYDTWAPGGGDVRIIS, KPFGWVRRAFIWNGEAYLSYS, and WYNNTVYPSEFFGPTAAEASQS. [CaMn4O5] cluster is bound at residue Glu355. A helical transmembrane segment spans residues 435-459; the sequence is RARAAAAGFEKGIDRATEPVLAMRD.

The protein belongs to the PsbB/PsbC family. PsbC subfamily. As to quaternary structure, PSII is composed of 1 copy each of membrane proteins PsbA, PsbB, PsbC, PsbD, PsbE, PsbF, PsbH, PsbI, PsbJ, PsbK, PsbL, PsbM, PsbT, PsbX, PsbY, PsbZ, Psb30/Ycf12, peripheral proteins PsbO, CyanoQ (PsbQ), PsbU, PsbV and a large number of cofactors. It forms dimeric complexes. Binds multiple chlorophylls and provides some of the ligands for the Ca-4Mn-5O cluster of the oxygen-evolving complex. It may also provide a ligand for a Cl- that is required for oxygen evolution. PSII binds additional chlorophylls, carotenoids and specific lipids. is required as a cofactor.

The protein resides in the cellular thylakoid membrane. In terms of biological role, one of the components of the core complex of photosystem II (PSII). It binds chlorophyll and helps catalyze the primary light-induced photochemical processes of PSII. PSII is a light-driven water:plastoquinone oxidoreductase, using light energy to abstract electrons from H(2)O, generating O(2) and a proton gradient subsequently used for ATP formation. In Synechococcus elongatus (strain ATCC 33912 / PCC 7942 / FACHB-805) (Anacystis nidulans R2), this protein is Photosystem II CP43 reaction center protein.